Reading from the N-terminus, the 829-residue chain is ATP-dependent RNA helicase drs1 (829 aa).

Disordered stretches follow at residues 1–96 (MAPS…MDTE) and 145–295 (RRER…MSSF). Over residues 20–32 (DNEEDIPLEEEQE) the composition is skewed to acidic residues. Over residues 48–59 (KQKKKNNKKSKK) the composition is skewed to basic residues. Acidic residues predominate over residues 63 to 78 (TEDDDDEAETKEDDAA). A compositionally biased stretch (basic and acidic residues) spans 150–163 (AAKEGKTTATKEEE). Composition is skewed to acidic residues over residues 164-190 (DKME…DGVL), 218-228 (DGEDEDSEGED), 235-246 (DEDEGDASDDDS), and 258-271 (QSSD…EEEE). Basic and acidic residues predominate over residues 272-291 (AKMKEFFAPEEENQPKKKGE). The short motif at 293–321 (SSFQEMSLSRPILRGLTSVGFTKPTPIQA) is the Q motif element. Residues 324–498 (IPISLMGKDV…RAGLNKPVRI (175 aa)) enclose the Helicase ATP-binding domain. ATP is bound at residue 337-344 (AVTGSGKT). The DEAD box motif lies at 446–449 (DEAD). The 180-residue stretch at 528–707 (YLLHICKTIY…EKQLQNMEMQ (180 aa)) folds into the Helicase C-terminal domain. The tract at residues 728–829 (TWFETQEDKK…KGGKGKGRRK (102 aa)) is disordered. Basic and acidic residues predominate over residues 749 to 791 (GVRDKLKSKNEGKLSNKDRKKLDTMQERKQERTYKKGSAERAG). The span at 800–815 (KVVKKVGRSAGPKKKG) shows a compositional bias: basic residues.

Belongs to the DEAD box helicase family. DDX27/DRS1 subfamily. As to quaternary structure, associates with pre-ribosomal particles.

Its subcellular location is the nucleus. The protein resides in the nucleolus. It catalyses the reaction ATP + H2O = ADP + phosphate + H(+). In terms of biological role, ATP-binding RNA helicase involved in ribosome assembly. This Neurospora crassa (strain ATCC 24698 / 74-OR23-1A / CBS 708.71 / DSM 1257 / FGSC 987) protein is ATP-dependent RNA helicase drs1 (drh-11).